Consider the following 333-residue polypeptide: Ketol-acid reductoisomerase (NADP(+)) (333 aa).

One can recognise a KARI N-terminal Rossmann domain in the interval 1–171 (MSNHTQPKIA…GGARANIIKT (171 aa)). NADP(+)-binding positions include 14–17 (YGSQ), R37, T42, and 72–75 (DMVQ). Residue H97 is part of the active site. Residue G123 participates in NADP(+) binding. The region spanning 172–317 (TFKEETETDL…KKLRAKMVWL (146 aa)) is the KARI C-terminal knotted domain. Residues D180, E184, E216, and E220 each contribute to the Mg(2+) site. Residue S241 coordinates substrate.

Belongs to the ketol-acid reductoisomerase family. Mg(2+) serves as cofactor.

The enzyme catalyses (2R)-2,3-dihydroxy-3-methylbutanoate + NADP(+) = (2S)-2-acetolactate + NADPH + H(+). It catalyses the reaction (2R,3R)-2,3-dihydroxy-3-methylpentanoate + NADP(+) = (S)-2-ethyl-2-hydroxy-3-oxobutanoate + NADPH + H(+). The protein operates within amino-acid biosynthesis; L-isoleucine biosynthesis; L-isoleucine from 2-oxobutanoate: step 2/4. Its pathway is amino-acid biosynthesis; L-valine biosynthesis; L-valine from pyruvate: step 2/4. Functionally, involved in the biosynthesis of branched-chain amino acids (BCAA). Catalyzes an alkyl-migration followed by a ketol-acid reduction of (S)-2-acetolactate (S2AL) to yield (R)-2,3-dihydroxy-isovalerate. In the isomerase reaction, S2AL is rearranged via a Mg-dependent methyl migration to produce 3-hydroxy-3-methyl-2-ketobutyrate (HMKB). In the reductase reaction, this 2-ketoacid undergoes a metal-dependent reduction by NADPH to yield (R)-2,3-dihydroxy-isovalerate. The protein is Ketol-acid reductoisomerase (NADP(+)) of Xanthomonas axonopodis pv. citri (strain 306).